Consider the following 394-residue polypeptide: Phosphoglycerate kinase (394 aa).

Residues 21 to 23 (DFN), Arg-37, 60 to 63 (HLGR), Arg-119, and Arg-152 contribute to the substrate site. Residues Lys-202, Gly-293, Glu-324, and 350 to 353 (GGDS) contribute to the ATP site.

It belongs to the phosphoglycerate kinase family. As to quaternary structure, monomer.

The protein resides in the cytoplasm. The enzyme catalyses (2R)-3-phosphoglycerate + ATP = (2R)-3-phospho-glyceroyl phosphate + ADP. The protein operates within carbohydrate degradation; glycolysis; pyruvate from D-glyceraldehyde 3-phosphate: step 2/5. The protein is Phosphoglycerate kinase of Caldanaerobacter subterraneus subsp. tengcongensis (strain DSM 15242 / JCM 11007 / NBRC 100824 / MB4) (Thermoanaerobacter tengcongensis).